Here is a 304-residue protein sequence, read N- to C-terminus: Uricase (304 aa).

An N-acetylalanine modification is found at Ala-2. An N6-acetyllysine; alternate mark is found at Lys-10 and Lys-23. 2 positions are modified to N6-succinyllysine; alternate: Lys-10 and Lys-23. The active-site Charge relay system is Lys-23. Residues Lys-27 and Lys-36 each carry the N6-acetyllysine modification. Phosphoserine is present on residues Ser-39 and Ser-63. Thr-68 functions as the Charge relay system in the catalytic mechanism. The urate site is built by Thr-68 and Asp-69. Residues Lys-118, Lys-122, and Lys-164 each carry the N6-acetyllysine modification. Phe-170 is a binding site for urate. An N6-acetyllysine mark is found at Lys-175 and Lys-185. Residue Arg-187 participates in urate binding. Lys-221 and Lys-228 each carry N6-acetyllysine; alternate. An N6-succinyllysine; alternate mark is found at Lys-221 and Lys-228. Ser-232 carries the post-translational modification Phosphoserine. Residues Val-235, Gln-236, and Asn-262 each coordinate urate. The active-site Charge relay system is His-264. Residue Lys-278 is modified to N6-acetyllysine. Tyr-289 is modified (phosphotyrosine). A Microbody targeting signal motif is present at residues 302–304; the sequence is SRL.

It belongs to the uricase family.

The protein resides in the peroxisome. It catalyses the reaction urate + O2 + H2O = 5-hydroxyisourate + H2O2. It functions in the pathway purine metabolism; urate degradation; (S)-allantoin from urate: step 1/3. Its function is as follows. Catalyzes the oxidation of uric acid to 5-hydroxyisourate, which is further processed to form (S)-allantoin. In Macaca mulatta (Rhesus macaque), this protein is Uricase (UOX).